A 291-amino-acid chain; its full sequence is Acetyl-coenzyme A carboxylase carboxyl transferase subunit beta (291 aa).

Positions 36–291 constitute a CoA carboxyltransferase N-terminal domain; it reads MWVKCDGCGK…KILVIHGRGN (256 aa). Zn(2+) is bound by residues Cys40, Cys43, Cys59, and Cys62. A C4-type zinc finger spans residues 40–62; sequence CDGCGKVLYKNDMEKNNKVCYHC.

It belongs to the AccD/PCCB family. Acetyl-CoA carboxylase is a heterohexamer composed of biotin carboxyl carrier protein (AccB), biotin carboxylase (AccC) and two subunits each of ACCase subunit alpha (AccA) and ACCase subunit beta (AccD). Zn(2+) serves as cofactor.

It is found in the cytoplasm. It carries out the reaction N(6)-carboxybiotinyl-L-lysyl-[protein] + acetyl-CoA = N(6)-biotinyl-L-lysyl-[protein] + malonyl-CoA. It functions in the pathway lipid metabolism; malonyl-CoA biosynthesis; malonyl-CoA from acetyl-CoA: step 1/1. Its function is as follows. Component of the acetyl coenzyme A carboxylase (ACC) complex. Biotin carboxylase (BC) catalyzes the carboxylation of biotin on its carrier protein (BCCP) and then the CO(2) group is transferred by the transcarboxylase to acetyl-CoA to form malonyl-CoA. The sequence is that of Acetyl-coenzyme A carboxylase carboxyl transferase subunit beta from Clostridium kluyveri (strain NBRC 12016).